The chain runs to 309 residues: Sulfate adenylyltransferase subunit 2 (309 aa).

It belongs to the PAPS reductase family. CysD subfamily. As to quaternary structure, heterodimer composed of CysD, the smaller subunit, and CysN.

It catalyses the reaction sulfate + ATP + H(+) = adenosine 5'-phosphosulfate + diphosphate. It participates in sulfur metabolism; hydrogen sulfide biosynthesis; sulfite from sulfate: step 1/3. Functionally, with CysN forms the ATP sulfurylase (ATPS) that catalyzes the adenylation of sulfate producing adenosine 5'-phosphosulfate (APS) and diphosphate, the first enzymatic step in sulfur assimilation pathway. APS synthesis involves the formation of a high-energy phosphoric-sulfuric acid anhydride bond driven by GTP hydrolysis by CysN coupled to ATP hydrolysis by CysD. The chain is Sulfate adenylyltransferase subunit 2 from Mycobacterium sp. (strain KMS).